The primary structure comprises 130 residues: Small ribosomal subunit protein uS11c (130 aa).

The protein belongs to the universal ribosomal protein uS11 family. As to quaternary structure, part of the 30S ribosomal subunit.

The protein localises to the plastid. It localises to the chloroplast. The protein is Small ribosomal subunit protein uS11c of Nephroselmis olivacea (Green alga).